Reading from the N-terminus, the 202-residue chain is Nucleoside triphosphate pyrophosphatase (202 aa).

Aspartate 79 serves as the catalytic Proton acceptor.

The protein belongs to the Maf family. It depends on a divalent metal cation as a cofactor.

The protein resides in the cytoplasm. It carries out the reaction a ribonucleoside 5'-triphosphate + H2O = a ribonucleoside 5'-phosphate + diphosphate + H(+). The catalysed reaction is a 2'-deoxyribonucleoside 5'-triphosphate + H2O = a 2'-deoxyribonucleoside 5'-phosphate + diphosphate + H(+). Functionally, nucleoside triphosphate pyrophosphatase. May have a dual role in cell division arrest and in preventing the incorporation of modified nucleotides into cellular nucleic acids. The protein is Nucleoside triphosphate pyrophosphatase of Rhodopseudomonas palustris (strain HaA2).